Here is a 224-residue protein sequence, read N- to C-terminus: Glycerol-3-phosphate acyltransferase (224 aa).

5 helical membrane-spanning segments follow: residues Phe14–Ile34, Thr64–Val84, Met98–Ala118, Leu127–Ile147, and Leu160–Leu180.

This sequence belongs to the PlsY family. In terms of assembly, probably interacts with PlsX.

It is found in the cell inner membrane. It carries out the reaction an acyl phosphate + sn-glycerol 3-phosphate = a 1-acyl-sn-glycero-3-phosphate + phosphate. Its pathway is lipid metabolism; phospholipid metabolism. Functionally, catalyzes the transfer of an acyl group from acyl-phosphate (acyl-PO(4)) to glycerol-3-phosphate (G3P) to form lysophosphatidic acid (LPA). This enzyme utilizes acyl-phosphate as fatty acyl donor, but not acyl-CoA or acyl-ACP. The polypeptide is Glycerol-3-phosphate acyltransferase (Albidiferax ferrireducens (strain ATCC BAA-621 / DSM 15236 / T118) (Rhodoferax ferrireducens)).